A 167-amino-acid chain; its full sequence is Bacterial non-heme ferritin (167 aa).

A Ferritin-like diiron domain is found at 1 to 145 (MLSKDIIKLL…DILDKIELIG (145 aa)). Fe cation-binding residues include Glu-17, Glu-50, His-53, Glu-94, and Gln-127.

Belongs to the ferritin family. Prokaryotic subfamily. In terms of assembly, homooligomer of 24 subunits that assemble into a spherical protein shell (12 +/- 1 nM diameter) that can sequester at least 2000 iron atoms.

Its subcellular location is the cytoplasm. It catalyses the reaction 4 Fe(2+) + O2 + 6 H2O = 4 iron(III) oxide-hydroxide + 12 H(+). Functionally, iron-storage protein. This chain is Bacterial non-heme ferritin (ftnA), found in Helicobacter pylori (strain ATCC 700392 / 26695) (Campylobacter pylori).